Reading from the N-terminus, the 196-residue chain is MAKLHFYYSAMNAGKSTTLLQSSYNYNERGMDTLVFLPVVDDREGERKIATRIGLSGKTIALTKDTNLFKCISDKLAENPNIRCVLVDEAQFLTKSQVEALALVTDELNLPVLAYGIRTDFQGEPFEGSVYLLAWADLLIEIKTICHCGRKATMNLRIDDEGNPIREGEQIRLGGNDRYTATCRKHFRLGQPTQTK.

ATP is bound by residues 9–16 (SAMNAGKS) and 88–91 (DEAQ). The active-site Proton acceptor is the Glu-89. Zn(2+) is bound by residues Cys-146, Cys-148, Cys-183, and His-186.

This sequence belongs to the thymidine kinase family. As to quaternary structure, homotetramer.

It localises to the cytoplasm. The enzyme catalyses thymidine + ATP = dTMP + ADP + H(+). The polypeptide is Thymidine kinase (Coxiella burnetii (strain RSA 493 / Nine Mile phase I)).